We begin with the raw amino-acid sequence, 474 residues long: Protein nucleotidyltransferase YdiU (474 aa).

The ATP site is built by G89, G91, R92, K112, D124, G125, R175, and R182. The active-site Proton acceptor is the D256. N257 and D266 together coordinate Mg(2+). D266 provides a ligand contact to ATP.

The protein belongs to the SELO family. Mg(2+) is required as a cofactor. Mn(2+) serves as cofactor.

The catalysed reaction is L-seryl-[protein] + ATP = 3-O-(5'-adenylyl)-L-seryl-[protein] + diphosphate. It carries out the reaction L-threonyl-[protein] + ATP = 3-O-(5'-adenylyl)-L-threonyl-[protein] + diphosphate. It catalyses the reaction L-tyrosyl-[protein] + ATP = O-(5'-adenylyl)-L-tyrosyl-[protein] + diphosphate. The enzyme catalyses L-histidyl-[protein] + UTP = N(tele)-(5'-uridylyl)-L-histidyl-[protein] + diphosphate. The catalysed reaction is L-seryl-[protein] + UTP = O-(5'-uridylyl)-L-seryl-[protein] + diphosphate. It carries out the reaction L-tyrosyl-[protein] + UTP = O-(5'-uridylyl)-L-tyrosyl-[protein] + diphosphate. In terms of biological role, nucleotidyltransferase involved in the post-translational modification of proteins. It can catalyze the addition of adenosine monophosphate (AMP) or uridine monophosphate (UMP) to a protein, resulting in modifications known as AMPylation and UMPylation. The sequence is that of Protein nucleotidyltransferase YdiU from Corynebacterium glutamicum (strain ATCC 13032 / DSM 20300 / JCM 1318 / BCRC 11384 / CCUG 27702 / LMG 3730 / NBRC 12168 / NCIMB 10025 / NRRL B-2784 / 534).